Consider the following 641-residue polypeptide: Acetyl-coenzyme A synthetase (641 aa).

Residues Arg-186–Lys-189 and Thr-304 contribute to the CoA site. Residues Gly-380–Pro-382, Asp-404–Thr-409, Asp-493, and Arg-508 each bind ATP. Position 516 (Ser-516) interacts with CoA. ATP is bound at residue Arg-519. Residues Val-530, His-532, and Ile-535 each contribute to the Mg(2+) site. Lys-602 bears the N6-acetyllysine mark.

It belongs to the ATP-dependent AMP-binding enzyme family. It depends on Mg(2+) as a cofactor. In terms of processing, acetylated. Deacetylation by the SIR2-homolog deacetylase activates the enzyme.

The enzyme catalyses acetate + ATP + CoA = acetyl-CoA + AMP + diphosphate. In terms of biological role, catalyzes the conversion of acetate into acetyl-CoA (AcCoA), an essential intermediate at the junction of anabolic and catabolic pathways. AcsA undergoes a two-step reaction. In the first half reaction, AcsA combines acetate with ATP to form acetyl-adenylate (AcAMP) intermediate. In the second half reaction, it can then transfer the acetyl group from AcAMP to the sulfhydryl group of CoA, forming the product AcCoA. The chain is Acetyl-coenzyme A synthetase from Gamma-proteobacterium EBAC31A08.